The chain runs to 208 residues: Uridine kinase (208 aa).

An ATP-binding site is contributed by 11–18 (GGTGSGKS).

The protein belongs to the uridine kinase family.

The protein localises to the cytoplasm. The enzyme catalyses uridine + ATP = UMP + ADP + H(+). It catalyses the reaction cytidine + ATP = CMP + ADP + H(+). It functions in the pathway pyrimidine metabolism; CTP biosynthesis via salvage pathway; CTP from cytidine: step 1/3. It participates in pyrimidine metabolism; UMP biosynthesis via salvage pathway; UMP from uridine: step 1/1. This is Uridine kinase from Clostridium perfringens (strain ATCC 13124 / DSM 756 / JCM 1290 / NCIMB 6125 / NCTC 8237 / Type A).